The sequence spans 160 residues: SsrA-binding protein (160 aa).

This sequence belongs to the SmpB family.

The protein resides in the cytoplasm. Required for rescue of stalled ribosomes mediated by trans-translation. Binds to transfer-messenger RNA (tmRNA), required for stable association of tmRNA with ribosomes. tmRNA and SmpB together mimic tRNA shape, replacing the anticodon stem-loop with SmpB. tmRNA is encoded by the ssrA gene; the 2 termini fold to resemble tRNA(Ala) and it encodes a 'tag peptide', a short internal open reading frame. During trans-translation Ala-aminoacylated tmRNA acts like a tRNA, entering the A-site of stalled ribosomes, displacing the stalled mRNA. The ribosome then switches to translate the ORF on the tmRNA; the nascent peptide is terminated with the 'tag peptide' encoded by the tmRNA and targeted for degradation. The ribosome is freed to recommence translation, which seems to be the essential function of trans-translation. The protein is SsrA-binding protein of Haemophilus ducreyi (strain 35000HP / ATCC 700724).